The sequence spans 141 residues: Hemoglobin subunit alpha (141 aa).

A Globin domain is found at 1-141 (VLSSADKNNV…VSTVLTSKYR (141 aa)). A Phosphoserine modification is found at Ser-3. 2 positions are modified to N6-succinyllysine: Lys-7 and Lys-11. Residue Lys-16 is modified to N6-acetyllysine; alternate. Lys-16 is modified (N6-succinyllysine; alternate). Tyr-24 carries the post-translational modification Phosphotyrosine. Ser-35 bears the Phosphoserine mark. Residue Lys-40 is modified to N6-succinyllysine. Position 49 is a phosphoserine (Ser-49). His-58 provides a ligand contact to O2. His-87 lines the heme b pocket. Ser-102 is subject to Phosphoserine. Thr-108 bears the Phosphothreonine mark. Phosphoserine is present on Ser-124. 2 positions are modified to phosphothreonine: Thr-134 and Thr-137. Phosphoserine is present on Ser-138.

This sequence belongs to the globin family. Heterotetramer of two alpha chains and two beta chains. Red blood cells.

Involved in oxygen transport from the lung to the various peripheral tissues. Its function is as follows. Hemopressin acts as an antagonist peptide of the cannabinoid receptor CNR1. Hemopressin-binding efficiently blocks cannabinoid receptor CNR1 and subsequent signaling. This Panthera tigris sumatrae (Sumatran tiger) protein is Hemoglobin subunit alpha (HBA).